The following is a 126-amino-acid chain: uncharacterized protein (126 aa).

It belongs to the SufE family.

This is an uncharacterized protein from Haemophilus influenzae (strain ATCC 51907 / DSM 11121 / KW20 / Rd).